We begin with the raw amino-acid sequence, 247 residues long: TLC domain-containing protein 1 (247 aa).

The N-terminal stretch at 1-35 is a signal peptide; that stretch reads MPRLLHPALPLLLGATLTFRALRRALCRLPLPVHV. Residues 36–46 are Extracellular-facing; the sequence is RADPLRTWRWH. Positions 40 to 234 constitute a TLC domain; that stretch reads LRTWRWHNLL…LLRSDFCPEH (195 aa). The chain crosses the membrane as a helical span at residues 47–67; that stretch reads NLLVSFAHSIVSGIWALLCVW. Topologically, residues 68–83 are cytoplasmic; the sequence is QTPDMLVEIETAWSLS. The helical transmembrane segment at 84–104 threads the bilayer; it reads GYLLVCFSAGYFIHDTVDIVA. Over 105 to 123 the chain is Extracellular; the sequence is SGQTRASWEYLVHHVMAMG. Residues 124–144 constitute an intramembrane region (helical); it reads AFFSGIFWSSFVGGGVLTLLV. Residues 145 to 173 lie on the Extracellular side of the membrane; it reads EVSNIFLTIRMMMKISNAQDHLLYRVNKY. A helical transmembrane segment spans residues 174 to 194; that stretch reads VNLVMYFLFRLAPQAYLTHFF. Over 195-201 the chain is Cytoplasmic; the sequence is LRYVNQR. A helical membrane pass occupies residues 202 to 222; it reads TLGTFLLGILLMLDVMIIIYF. Topologically, residues 223-247 are extracellular; that stretch reads SRLLRSDFCPEHVPKKQHKDKFLTE.

It is found in the cell membrane. Functionally, regulates the composition and fluidity of the plasma membrane. Inhibits the incorporation of membrane-fluidizing phospholipids containing omega-3 long-chain polyunsaturated fatty acids (LCPUFA) and thereby promotes membrane rigidity. Does not appear to have any effect on LCPUFA synthesis. This is TLC domain-containing protein 1 (TLCD1) from Homo sapiens (Human).